Consider the following 481-residue polypeptide: Glutamyl-tRNA(Gln) amidotransferase subunit A (481 aa).

Active-site charge relay system residues include K74 and S149. S173 acts as the Acyl-ester intermediate in catalysis.

The protein belongs to the amidase family. GatA subfamily. As to quaternary structure, heterotrimer of A, B and C subunits.

The catalysed reaction is L-glutamyl-tRNA(Gln) + L-glutamine + ATP + H2O = L-glutaminyl-tRNA(Gln) + L-glutamate + ADP + phosphate + H(+). Allows the formation of correctly charged Gln-tRNA(Gln) through the transamidation of misacylated Glu-tRNA(Gln) in organisms which lack glutaminyl-tRNA synthetase. The reaction takes place in the presence of glutamine and ATP through an activated gamma-phospho-Glu-tRNA(Gln). This Francisella tularensis subsp. mediasiatica (strain FSC147) protein is Glutamyl-tRNA(Gln) amidotransferase subunit A.